Consider the following 173-residue polypeptide: Ribosome maturation factor RimM (173 aa).

Positions 95 to 169 (DPDEFYDHQL…VIEIDPPEGL (75 aa)) constitute a PRC barrel domain.

Belongs to the RimM family. Binds ribosomal protein uS19.

The protein resides in the cytoplasm. Functionally, an accessory protein needed during the final step in the assembly of 30S ribosomal subunit, possibly for assembly of the head region. Essential for efficient processing of 16S rRNA. May be needed both before and after RbfA during the maturation of 16S rRNA. It has affinity for free ribosomal 30S subunits but not for 70S ribosomes. In Mycobacteroides abscessus (strain ATCC 19977 / DSM 44196 / CCUG 20993 / CIP 104536 / JCM 13569 / NCTC 13031 / TMC 1543 / L948) (Mycobacterium abscessus), this protein is Ribosome maturation factor RimM.